Here is a 303-residue protein sequence, read N- to C-terminus: Porphobilinogen deaminase (303 aa).

Cys240 bears the S-(dipyrrolylmethanemethyl)cysteine mark.

This sequence belongs to the HMBS family. Monomer. It depends on dipyrromethane as a cofactor.

The enzyme catalyses 4 porphobilinogen + H2O = hydroxymethylbilane + 4 NH4(+). It functions in the pathway porphyrin-containing compound metabolism; protoporphyrin-IX biosynthesis; coproporphyrinogen-III from 5-aminolevulinate: step 2/4. Its function is as follows. Tetrapolymerization of the monopyrrole PBG into the hydroxymethylbilane pre-uroporphyrinogen in several discrete steps. This Stenotrophomonas maltophilia (strain R551-3) protein is Porphobilinogen deaminase.